The following is a 124-amino-acid chain: Small ribosomal subunit protein uS12 (124 aa).

3-methylthioaspartic acid is present on Asp89.

This sequence belongs to the universal ribosomal protein uS12 family. In terms of assembly, part of the 30S ribosomal subunit. Contacts proteins S8 and S17. May interact with IF1 in the 30S initiation complex.

Functionally, with S4 and S5 plays an important role in translational accuracy. Its function is as follows. Interacts with and stabilizes bases of the 16S rRNA that are involved in tRNA selection in the A site and with the mRNA backbone. Located at the interface of the 30S and 50S subunits, it traverses the body of the 30S subunit contacting proteins on the other side and probably holding the rRNA structure together. The combined cluster of proteins S8, S12 and S17 appears to hold together the shoulder and platform of the 30S subunit. The polypeptide is Small ribosomal subunit protein uS12 (Treponema pallidum subsp. pallidum (strain SS14)).